We begin with the raw amino-acid sequence, 556 residues long: Small ribosomal subunit protein uS3m (556 aa).

This sequence belongs to the universal ribosomal protein uS3 family. Component of the mitochondrial ribosome small subunit.

The protein resides in the mitochondrion. The polypeptide is Small ribosomal subunit protein uS3m (RPS3) (Arabidopsis thaliana (Mouse-ear cress)).